The sequence spans 1442 residues: Sulfite reductase [NADPH] subunit beta (1442 aa).

Residues 682 to 831 (LHVYYASDGG…AYSEWEPKLW (150 aa)) form the Flavodoxin-like domain. Serine 903 is subject to Phosphoserine. 4 residues coordinate [4Fe-4S] cluster: cysteine 1300, cysteine 1306, cysteine 1345, and cysteine 1349. Cysteine 1349 is a siroheme binding site.

This sequence belongs to the nitrite and sulfite reductase 4Fe-4S domain family. Alpha(2)-beta(2). The alpha component is a flavoprotein, the beta component is a hemoprotein. Siroheme is required as a cofactor. The cofactor is [4Fe-4S] cluster.

The protein localises to the cytoplasm. The enzyme catalyses hydrogen sulfide + 3 NADP(+) + 3 H2O = sulfite + 3 NADPH + 4 H(+). It participates in sulfur metabolism; hydrogen sulfide biosynthesis; hydrogen sulfide from sulfite (NADPH route): step 1/1. Functionally, catalyzes the reduction of sulfite to sulfide, one of several activities required for the biosynthesis of L-cysteine from sulfate. This is Sulfite reductase [NADPH] subunit beta (MET5) from Saccharomyces cerevisiae (strain ATCC 204508 / S288c) (Baker's yeast).